The sequence spans 429 residues: Enolase (429 aa).

Gln162 serves as a coordination point for (2R)-2-phosphoglycerate. The active-site Proton donor is Glu204. Mg(2+) is bound by residues Asp241, Glu283, and Asp310. Lys335, Arg364, Ser365, and Lys386 together coordinate (2R)-2-phosphoglycerate. The Proton acceptor role is filled by Lys335.

The protein belongs to the enolase family. Mg(2+) is required as a cofactor.

It is found in the cytoplasm. Its subcellular location is the secreted. The protein localises to the cell surface. It catalyses the reaction (2R)-2-phosphoglycerate = phosphoenolpyruvate + H2O. It functions in the pathway carbohydrate degradation; glycolysis; pyruvate from D-glyceraldehyde 3-phosphate: step 4/5. Functionally, catalyzes the reversible conversion of 2-phosphoglycerate (2-PG) into phosphoenolpyruvate (PEP). It is essential for the degradation of carbohydrates via glycolysis. This chain is Enolase, found in Mycolicibacterium gilvum (strain PYR-GCK) (Mycobacterium gilvum (strain PYR-GCK)).